The sequence spans 419 residues: uncharacterized protein (419 aa).

The next 11 membrane-spanning stretches (helical) occupy residues Met1–Leu21, Val24–Asp44, Ile66–Thr86, Ala101–Ile121, Ser174–Ala194, Asn216–Leu236, Ile242–Gly262, Pro280–Leu300, Ser311–Ala331, Leu349–Phe369, and Ile396–Val416.

This sequence belongs to the CitM (TC 2.A.11) transporter family.

Its subcellular location is the cell membrane. This is an uncharacterized protein from Haemophilus influenzae (strain ATCC 51907 / DSM 11121 / KW20 / Rd).